Consider the following 318-residue polypeptide: NADH-ubiquinone oxidoreductase chain 1 (318 aa).

A run of 8 helical transmembrane segments spans residues 2–22 (PVINLLLLTMSILIAMAFLML), 69–89 (ILYIVSPALALTIALLLWTPL), 100–120 (LGLLFILATSSLTVYSILWSG), 146–166 (LALILLSVLLMSGSFNLSTLI), 171–191 (HSWLLLPSWPLALMWFISTLA), 222–242 (LFFMAEYTNIILMNALTAMIF), 253–273 (ELHTTLFTIKTLLLTSLFLWI), and 294–314 (LPLTLALLMWHISMPITTSGI).

The protein belongs to the complex I subunit 1 family. In terms of assembly, core subunit of respiratory chain NADH dehydrogenase (Complex I) which is composed of 45 different subunits.

It localises to the mitochondrion inner membrane. It catalyses the reaction a ubiquinone + NADH + 5 H(+)(in) = a ubiquinol + NAD(+) + 4 H(+)(out). In terms of biological role, core subunit of the mitochondrial membrane respiratory chain NADH dehydrogenase (Complex I) which catalyzes electron transfer from NADH through the respiratory chain, using ubiquinone as an electron acceptor. Essential for the catalytic activity and assembly of complex I. The protein is NADH-ubiquinone oxidoreductase chain 1 (MT-ND1) of Pongo pygmaeus (Bornean orangutan).